The sequence spans 317 residues: Proline-rich protein 2 (317 aa).

An N-terminal signal peptide occupies residues 1–16 (MLVVLFTVALLALSSA). Positions 15–317 (SAQGPREELQ…PPQGRPQGPQ (303 aa)) are disordered. The span at 32-44 (QRPPPSGSQPRPP) shows a compositional bias: pro residues. N-linked (GlcNAc...) asparagine glycosylation occurs at asparagine 46. Composition is skewed to pro residues over residues 51–183 (GPPP…PPAG) and 204–288 (QSPP…PTQG). The segment covering 289–305 (PHPTGGPQQTPPLAGNP) has biased composition (low complexity). The span at 306-317 (QGPPQGRPQGPQ) shows a compositional bias: pro residues.

Its subcellular location is the secreted. The chain is Proline-rich protein 2 (Prp2) from Mus musculus (Mouse).